A 355-amino-acid polypeptide reads, in one-letter code: MSGISAQLVKKLRDLTDAGMMDCKKALVEVAGDLQKAIDFLREKGLSKAAKKADRIAAEGVVALEVAPDFKSAMMVEINSETDFVAKNEGFKELVKKTLETIKAHNIHTPEELLKSQLDNKPFEEYLHSQIAVIGENILVRKIAHLKALSSHIVNGYAHSNARVGVLIGIKYNNEKNAPKVVELARNIAMHAAAMKPQVLDCKDFSLDFVKKETLALIAEIEKDNEEAKRLGKPLKNIPTFGSRIELSDEVLAHQKKAFENELKEQGKPEKIWDKIVPGKMERFIADNTLIDQRLTLLGQFYVMDDKKTIAQVVADCSKEWDDDLKITEYVRFELGEGIEKKAENFAEEVALQMK.

The segment at T82–V85 is involved in Mg(2+) ion dislocation from EF-Tu.

It belongs to the EF-Ts family.

Its subcellular location is the cytoplasm. Functionally, associates with the EF-Tu.GDP complex and induces the exchange of GDP to GTP. It remains bound to the aminoacyl-tRNA.EF-Tu.GTP complex up to the GTP hydrolysis stage on the ribosome. The sequence is that of Elongation factor Ts from Helicobacter pylori (strain G27).